Reading from the N-terminus, the 390-residue chain is Nuclear receptor subfamily 2 group F member 6 (390 aa).

Over residues 1–15 (MAMVTGGWGDPGGDT) the composition is skewed to gly residues. The interval 1 to 50 (MAMVTGGWGDPGGDTNGVDKAGGSYPRATEDDSASPPGATSDAEPGDEER) is disordered. Residues S35 and S41 each carry the phosphoserine modification. Positions 54–129 (QVDCVVCGDK…VGMRKEAVQR (76 aa)) form a DNA-binding region, nuclear receptor. Residues 57-77 (CVVCGDKSSGKHYGVFTCEGC) form an NR C4-type zinc finger. S84 is subject to Phosphoserine. Residues 93 to 117 (CRSNRDCQIDQHHRNQCQYCRLKKC) form an NR C4-type zinc finger. One can recognise an NR LBD domain in the interval 157–380 (PVSELIAQLL…TLIRDMLLSG (224 aa)). The important for dimerization stretch occupies residues 314–390 (LQEKAQVALT…STFNWPYGSG (77 aa)).

The protein belongs to the nuclear hormone receptor family. NR2 subfamily. In terms of assembly, binds DNA as dimer; homodimer and heterodimer with NR2F2 and probably NR2F1. Interacts with THRB.

It is found in the nucleus. Its function is as follows. Transcription factor predominantly involved in transcriptional repression. Binds to promoter/enhancer response elements that contain the imperfect 5'-AGGTCA-3' direct or inverted repeats with various spacings which are also recognized by other nuclear hormone receptors. Involved in modulation of hormonal responses. Represses transcriptional activity of the lutropin-choriogonadotropic hormone receptor/LHCGR gene, the renin/REN gene and the oxytocin-neurophysin/OXT gene. Represses the triiodothyronine-dependent and -independent transcriptional activity of the thyroid hormone receptor gene in a cell type-specific manner. The corepressing function towards thyroid hormone receptor beta/THRB involves at least in part the inhibition of THRB binding to triiodothyronine response elements (TREs) by NR2F6. Inhibits NFATC transcription factor DNA binding and subsequently its transcriptional activity. Acts as transcriptional repressor of IL-17 expression in Th-17 differentiated CD4(+) T cells and may be involved in induction and/or maintenance of peripheral immunological tolerance and autoimmunity. Involved in development of forebrain circadian clock; is required early in the development of the locus coeruleus (LC). The protein is Nuclear receptor subfamily 2 group F member 6 (Nr2f6) of Mus musculus (Mouse).